Consider the following 88-residue polypeptide: Small ribosomal subunit protein bS20 (88 aa).

It belongs to the bacterial ribosomal protein bS20 family.

Functionally, binds directly to 16S ribosomal RNA. The protein is Small ribosomal subunit protein bS20 of Micrococcus luteus (strain ATCC 4698 / DSM 20030 / JCM 1464 / CCM 169 / CCUG 5858 / IAM 1056 / NBRC 3333 / NCIMB 9278 / NCTC 2665 / VKM Ac-2230) (Micrococcus lysodeikticus).